Reading from the N-terminus, the 525-residue chain is Serine/threonine protein phosphatase 2A 55 kDa regulatory subunit B beta isoform (525 aa).

Residues Met-1–Arg-30 form a disordered region. WD repeat units follow at residues Gln-48–Ser-87 and Glu-124–Ile-165. The segment at Asn-169 to Ala-191 is disordered. A compositionally biased stretch (low complexity) spans Asn-171–Ser-189. 4 WD repeats span residues Ala-244–Asn-282, Asp-293–Asn-333, Glu-352–Ala-390, and Asp-495–Ala-525.

It belongs to the phosphatase 2A regulatory subunit B family. In terms of assembly, PP2A consists of a common heteromeric enzyme, composed of a catalytic subunit (subunits C), a constant regulatory subunit (subunit A), and a variety of regulatory subunits such as subunits B (the R2/B/PR55/B55, R3/B''/PR72/PR130/PR59 and R5/B'/B56 families).

The B regulatory subunit may modulate substrate selectivity and catalytic activity, and may also direct the localization of the catalytic enzyme to a particular subcellular compartment. This is Serine/threonine protein phosphatase 2A 55 kDa regulatory subunit B beta isoform from Oryza sativa subsp. japonica (Rice).